Consider the following 314-residue polypeptide: Coiled-coil domain-containing protein 42 like-2 (314 aa).

Coiled-coil stretches lie at residues 34–133 and 175–231; these read RLLE…KGTL and NKLL…FQWE.

Belongs to the CFAP73 family.

This chain is Coiled-coil domain-containing protein 42 like-2, found in Xenopus tropicalis (Western clawed frog).